A 501-amino-acid polypeptide reads, in one-letter code: ATP synthase subunit alpha (501 aa).

Glycine 169 to threonine 176 contacts ATP.

It belongs to the ATPase alpha/beta chains family. F-type ATPases have 2 components, CF(1) - the catalytic core - and CF(0) - the membrane proton channel. CF(1) has five subunits: alpha(3), beta(3), gamma(1), delta(1), epsilon(1). CF(0) has three main subunits: a(1), b(2) and c(9-12). The alpha and beta chains form an alternating ring which encloses part of the gamma chain. CF(1) is attached to CF(0) by a central stalk formed by the gamma and epsilon chains, while a peripheral stalk is formed by the delta and b chains.

The protein resides in the cell membrane. It carries out the reaction ATP + H2O + 4 H(+)(in) = ADP + phosphate + 5 H(+)(out). In terms of biological role, produces ATP from ADP in the presence of a proton gradient across the membrane. The alpha chain is a regulatory subunit. This chain is ATP synthase subunit alpha, found in Streptococcus pneumoniae serotype 19F (strain G54).